The sequence spans 148 residues: Large ribosomal subunit protein bL9 (148 aa).

It belongs to the bacterial ribosomal protein bL9 family.

In terms of biological role, binds to the 23S rRNA. The protein is Large ribosomal subunit protein bL9 of Staphylococcus saprophyticus subsp. saprophyticus (strain ATCC 15305 / DSM 20229 / NCIMB 8711 / NCTC 7292 / S-41).